The primary structure comprises 374 residues: Phospho-N-acetylmuramoyl-pentapeptide-transferase (374 aa).

10 helical membrane passes run Ala-3–Ile-23, Met-52–Leu-72, Pro-85–Ile-105, Leu-125–Thr-145, Ile-170–Ala-190, Leu-201–Phe-221, Pro-244–Trp-264, Ile-271–Ser-291, Thr-294–Ile-314, and Phe-350–Leu-370.

It belongs to the glycosyltransferase 4 family. MraY subfamily. The cofactor is Mg(2+).

It localises to the cell membrane. It catalyses the reaction UDP-N-acetyl-alpha-D-muramoyl-L-alanyl-gamma-D-glutamyl-meso-2,6-diaminopimeloyl-D-alanyl-D-alanine + di-trans,octa-cis-undecaprenyl phosphate = di-trans,octa-cis-undecaprenyl diphospho-N-acetyl-alpha-D-muramoyl-L-alanyl-D-glutamyl-meso-2,6-diaminopimeloyl-D-alanyl-D-alanine + UMP. It participates in cell wall biogenesis; peptidoglycan biosynthesis. Its function is as follows. Catalyzes the initial step of the lipid cycle reactions in the biosynthesis of the cell wall peptidoglycan: transfers peptidoglycan precursor phospho-MurNAc-pentapeptide from UDP-MurNAc-pentapeptide onto the lipid carrier undecaprenyl phosphate, yielding undecaprenyl-pyrophosphoryl-MurNAc-pentapeptide, known as lipid I. This chain is Phospho-N-acetylmuramoyl-pentapeptide-transferase, found in Salinispora arenicola (strain CNS-205).